The primary structure comprises 335 residues: Fructose-1,6-bisphosphatase class 1 (335 aa).

Positions 92, 114, 116, and 117 each coordinate Mg(2+). Residues 117–120 (DGSS), N209, and K275 contribute to the substrate site. E281 lines the Mg(2+) pocket.

Belongs to the FBPase class 1 family. In terms of assembly, homotetramer. Requires Mg(2+) as cofactor.

Its subcellular location is the cytoplasm. The enzyme catalyses beta-D-fructose 1,6-bisphosphate + H2O = beta-D-fructose 6-phosphate + phosphate. It functions in the pathway carbohydrate biosynthesis; gluconeogenesis. The protein is Fructose-1,6-bisphosphatase class 1 of Polaromonas sp. (strain JS666 / ATCC BAA-500).